Reading from the N-terminus, the 365-residue chain is Pectate trisaccharide-lyase (365 aa).

The signal sequence occupies residues 1 to 25; the sequence is MRFSRVVSLVLLLVFTAVLTGAVKA. Residues Asp142, Asp164, and Asp168 each coordinate Ca(2+). The stretch at 149 to 171 is one PbH1 1 repeat; sequence SHHIWIDHCTFVNGNDGAVDIKK. Residue Arg222 is part of the active site. The stretch at 261 to 287 is one PbH1 2 repeat; sequence GAKVHVEGNYFMGYGAVMAEAGIAFLP.

This sequence belongs to the polysaccharide lyase 1 family. As to quaternary structure, homotetramer. Requires Ca(2+) as cofactor.

It is found in the secreted. The enzyme catalyses eliminative cleavage of unsaturated trigalacturonate as the major product from the reducing end of polygalacturonic acid/pectate.. In terms of biological role, cleaves unsaturated trigalacturonate from pectin. Activity is highest towards polygalacturonic acid, activity on methylated pectins decreases with an increasing degree of methylation. The polypeptide is Pectate trisaccharide-lyase (Thermotoga sp. (strain RQ2)).